Reading from the N-terminus, the 152-residue chain is Male-specific protein scotti (152 aa).

The protein belongs to the male-specific scotti family.

Its function is as follows. Post-meiotically transcribed gene that has a role in late spermiogenesis; required for actin cone progression during spermatid individualization. The protein is Male-specific protein scotti of Drosophila mojavensis (Fruit fly).